Consider the following 373-residue polypeptide: Probable leucine aminopeptidase 1 (373 aa).

A signal peptide spans 1 to 18 (MKLLSVLALSATATSVLG). Residues His176 and Asp195 each contribute to the Zn(2+) site. N-linked (GlcNAc...) asparagine glycosylation is present at Asn196. 2 residues coordinate Zn(2+): Glu234 and Asp261. A glycan (N-linked (GlcNAc...) asparagine) is linked at Asn288. Cysteines 310 and 314 form a disulfide. Position 343 (His343) interacts with Zn(2+).

This sequence belongs to the peptidase M28 family. M28E subfamily. Monomer. It depends on Zn(2+) as a cofactor.

The protein localises to the secreted. Functionally, extracellular aminopeptidase which contributes to pathogenicity. In Trichophyton verrucosum (strain HKI 0517), this protein is Probable leucine aminopeptidase 1 (LAP1).